Here is a 1192-residue protein sequence, read N- to C-terminus: Protein FAM83H (1192 aa).

5 disordered regions span residues 435-542 (EGMG…VKQG), 557-661 (DGGE…LAEP), 695-720 (SKLEQHNSSQAKSGGELQEEKEESEP), 737-1082 (LSRE…SNII), and 1094-1145 (ILEQ…ERDN). The span at 437-447 (MGHDDRGHYDR) shows a compositional bias: basic and acidic residues. Polar residues-rich tracts occupy residues 523-538 (QLFSTGDQVRQSQDPS) and 629-652 (SDLGPTSTDTLKPAISASSLASST). Composition is skewed to basic and acidic residues over residues 737-759 (LSREPFDWNKHKKADEKDVKHAS) and 768-789 (DTKEEPIKEKEKPDNPKPEENK). Positions 790–810 (VTQPTVPSASQQITSSLNMND) are enriched in polar residues. Residues 820-834 (DQQEKRKTSKLELDL) are compositionally biased toward basic and acidic residues. The span at 861-878 (TSEQSTVKAQEPTVSQTD) shows a compositional bias: polar residues. 2 stretches are compositionally biased toward basic and acidic residues: residues 880-892 (VPHRPVIETKPKP) and 914-925 (APKKEPVKEPTK). Residues 926-946 (SLKPFPSPKFLKPFKSSQSSS) show a composition bias toward low complexity. Basic and acidic residues predominate over residues 994 to 1005 (ESKDTKALDFLK). A compositionally biased stretch (polar residues) spans 1068-1082 (KPTTSRYQSSTSNII). The span at 1107-1122 (QQNEESGKGDGGKDDV) shows a compositional bias: basic and acidic residues.

This sequence belongs to the FAM83 family.

The protein resides in the cytoplasm. The protein localises to the cytoskeleton. Functionally, may play a role in keratin cytoskeleton disassembly. The sequence is that of Protein FAM83H from Danio rerio (Zebrafish).